Reading from the N-terminus, the 116-residue chain is UPF0122 protein CA_C1753 (116 aa).

This sequence belongs to the UPF0122 family.

In terms of biological role, might take part in the signal recognition particle (SRP) pathway. This is inferred from the conservation of its genetic proximity to ftsY/ffh. May be a regulatory protein. The chain is UPF0122 protein CA_C1753 from Clostridium acetobutylicum (strain ATCC 824 / DSM 792 / JCM 1419 / IAM 19013 / LMG 5710 / NBRC 13948 / NRRL B-527 / VKM B-1787 / 2291 / W).